The chain runs to 122 residues: Elsinochromes biosynthesis cluster protein HP4 (122 aa).

Functionally, part of the gene cluster that mediates the biosynthesis of elsinochromes, pigments consisting of at least four interconvertible tautomers (A, B, C and D) that have a core phenolic quinone to which various side chains are attached and which play an important role in fungal pathogenesis. The non-reducing polyketide synthase PKS1 was proposed to iteratively catalyze decarboxylation between acetyl-CoA and malonyl-CoA subunits for polyketide chain elongation. The released polyketide undergoes cyclization to form an aromatic ring, and proceeds via serial modification steps to produce the heptaketide back- bone of elsinochrome. As elsinochrome has a symmetrical structure, two identical heptaketides are fused to form a core 1,2-dihydrobenzo-perylene ring structure, which can then be successively modified to produce the various derivatives of elsinochrome. Some of these reactions may be cooperatively carried out, at least in part, by the products of RDT1, OXR1 and PKS1. PRF1, embedded within the elsinochrome cluster possibly functions to stabilize some of the biosynthetic enzymes required for elsinochrome production. As prefoldin is a hexamer containing 2 a and 4 b subunits, additional prefoldin subunits, whose coding genes may not immediately link to the elsinochrome biosynthetic gene cluster, are required to fulfill the chaperone function. In addition, no methyltransferase-coding gene exists within the biosynthetic gene cluster, even though elsinochrome has four methyl groups at positions C3, C7, C8 and C12. Apparently, the identified gene cluster does not contain the entire entourage of genes responsible for elsinochrome biosynthesis. Once elsinochrome is synthesized, it must be exported outside the fungal cells, which is probably accomplished by the ECT1 transporter, to avoid toxicity. This is Elsinochromes biosynthesis cluster protein HP4 from Elsinoe fawcettii (Citrus scab fungus).